The primary structure comprises 406 residues: NIPA-like protein 3 (406 aa).

Helical transmembrane passes span 33–53 (NLIGALLAIFGHLVVSIALNL), 76–96 (WWLGLFLMLLGELGVFASYAF), 101–121 (LIVPLSAVSVIASAIIGIIFI), and 135–155 (VLSFVGCGLAVVGTYLLVTFA). N-linked (GlcNAc...) asparagine glycosylation occurs at Asn166. The next 5 membrane-spanning stretches (helical) occupy residues 171–191 (LVSWPFLLYMLVEIILFCLLL), 202–222 (IVVILLLVALLGSMTVVTVKA), 240–260 (PIFYVMFVCMVATAVYQAAFL), 271–291 (LIASVGYILSTTIAITAGAIF), and 300–320 (VLHICMFALGCLIAFLGVFLI). Ser372 carries the post-translational modification Phosphoserine.

The protein belongs to the NIPA family.

Its subcellular location is the membrane. In Homo sapiens (Human), this protein is NIPA-like protein 3 (NIPAL3).